The primary structure comprises 278 residues: Dermonecrotic toxin Ls4SicTox-alphaIII1ii (278 aa).

His-5 is a catalytic residue. Residues Glu-25 and Asp-27 each contribute to the Mg(2+) site. The Nucleophile role is filled by His-40. Cysteines 44 and 50 form a disulfide. Asp-84 serves as a coordination point for Mg(2+).

The protein belongs to the arthropod phospholipase D family. Class I subfamily. The cofactor is Mg(2+). Expressed by the venom gland.

It localises to the secreted. It carries out the reaction an N-(acyl)-sphingosylphosphocholine = an N-(acyl)-sphingosyl-1,3-cyclic phosphate + choline. The enzyme catalyses an N-(acyl)-sphingosylphosphoethanolamine = an N-(acyl)-sphingosyl-1,3-cyclic phosphate + ethanolamine. It catalyses the reaction a 1-acyl-sn-glycero-3-phosphocholine = a 1-acyl-sn-glycero-2,3-cyclic phosphate + choline. The catalysed reaction is a 1-acyl-sn-glycero-3-phosphoethanolamine = a 1-acyl-sn-glycero-2,3-cyclic phosphate + ethanolamine. Its function is as follows. Dermonecrotic toxins cleave the phosphodiester linkage between the phosphate and headgroup of certain phospholipids (sphingolipid and lysolipid substrates), forming an alcohol (often choline) and a cyclic phosphate. This toxin acts on sphingomyelin (SM). It may also act on ceramide phosphoethanolamine (CPE), lysophosphatidylcholine (LPC) and lysophosphatidylethanolamine (LPE), but not on lysophosphatidylserine (LPS), and lysophosphatidylglycerol (LPG). It acts by transphosphatidylation, releasing exclusively cyclic phosphate products as second products. Induces dermonecrosis, hemolysis, increased vascular permeability, edema, inflammatory response, and platelet aggregation. This chain is Dermonecrotic toxin Ls4SicTox-alphaIII1ii, found in Loxosceles sp. (strain 4 GJB-2008) (Recluse spider).